A 168-amino-acid polypeptide reads, in one-letter code: Thiol peroxidase (168 aa).

The 150-residue stretch at 19–168 (PQAGSKAQAF…YDAALNVLKA (150 aa)) folds into the Thioredoxin domain. Residue Cys-61 is the Cysteine sulfenic acid (-SOH) intermediate of the active site. Cys-61 and Cys-95 are joined by a disulfide.

The protein belongs to the peroxiredoxin family. Tpx subfamily. As to quaternary structure, homodimer.

It catalyses the reaction a hydroperoxide + [thioredoxin]-dithiol = an alcohol + [thioredoxin]-disulfide + H2O. Thiol-specific peroxidase that catalyzes the reduction of hydrogen peroxide and organic hydroperoxides to water and alcohols, respectively. Plays a role in cell protection against oxidative stress by detoxifying peroxides. The sequence is that of Thiol peroxidase from Salmonella typhimurium (strain LT2 / SGSC1412 / ATCC 700720).